Reading from the N-terminus, the 195-residue chain is Large ribosomal subunit protein bL17 (195 aa).

The disordered stretch occupies residues 125 to 195 (ANRARRVGAS…PTQDSDADKS (71 aa)). The span at 136 to 152 (QTAPVAAAAAPQAAVEP) shows a compositional bias: low complexity. Acidic residues-rich tracts occupy residues 153–173 (EATE…EDTT) and 183–195 (TDDP…ADKS).

This sequence belongs to the bacterial ribosomal protein bL17 family. As to quaternary structure, part of the 50S ribosomal subunit. Contacts protein L32.

The sequence is that of Large ribosomal subunit protein bL17 from Mycobacterium sp. (strain JLS).